Here is a 210-residue protein sequence, read N- to C-terminus: Leucyl/phenylalanyl-tRNA--protein transferase (210 aa).

This sequence belongs to the L/F-transferase family.

Its subcellular location is the cytoplasm. The catalysed reaction is N-terminal L-lysyl-[protein] + L-leucyl-tRNA(Leu) = N-terminal L-leucyl-L-lysyl-[protein] + tRNA(Leu) + H(+). It catalyses the reaction N-terminal L-arginyl-[protein] + L-leucyl-tRNA(Leu) = N-terminal L-leucyl-L-arginyl-[protein] + tRNA(Leu) + H(+). The enzyme catalyses L-phenylalanyl-tRNA(Phe) + an N-terminal L-alpha-aminoacyl-[protein] = an N-terminal L-phenylalanyl-L-alpha-aminoacyl-[protein] + tRNA(Phe). Its function is as follows. Functions in the N-end rule pathway of protein degradation where it conjugates Leu, Phe and, less efficiently, Met from aminoacyl-tRNAs to the N-termini of proteins containing an N-terminal arginine or lysine. This chain is Leucyl/phenylalanyl-tRNA--protein transferase, found in Deinococcus radiodurans (strain ATCC 13939 / DSM 20539 / JCM 16871 / CCUG 27074 / LMG 4051 / NBRC 15346 / NCIMB 9279 / VKM B-1422 / R1).